A 1061-amino-acid polypeptide reads, in one-letter code: DNA polymerase (1061 aa).

The segment at 773–792 (NSEAEESDEDQGPAPFYSPP) is disordered.

It belongs to the DNA polymerase type-B family. Heterodimer with the terminal protein; this heterodimer binds to bp 9 to 18 of the genome. Forms a complex with viral pTP, DBP and hosts NFIA and POU2F1/OCT1 for initiation of replication.

Its subcellular location is the host nucleus. The catalysed reaction is DNA(n) + a 2'-deoxyribonucleoside 5'-triphosphate = DNA(n+1) + diphosphate. Functionally, eukaryotic-type DNA polymerase involved in viral genomic replication. DNA synthesis is protein primed, and acts in a strand displacement replication. Assembles in complex with viral pTP, DBP, host NFIA and host POU2F1/OCT1 on viral origin of replication. The polymerase covalently transfers dCMP onto pTP, thereby initiating complementary strand synthesis. The sequence is that of DNA polymerase from Human adenovirus A serotype 12 (HAdV-12).